The chain runs to 323 residues: Aquaporin-4 (323 aa).

Residues 1–36 (MSDRPTARRWGKCGPLCTRENIMVAFKGVWTQAFWK) lie on the Cytoplasmic side of the membrane. 2 S-palmitoyl cysteine lipidation sites follow: Cys-13 and Cys-17. The chain crosses the membrane as a helical span at residues 37-57 (AVTAEFLAMLIFVLLSLGSTI). At 58-69 (NWGGTEKPLPVD) the chain is on the extracellular side. The helical transmembrane segment at 70-89 (MVLISLCFGLSIATMVQCFG) threads the bilayer. Residues 90–93 (HISG) are Cytoplasmic-facing. The segment at residues 94–101 (GHINPAVT) is an intramembrane region (discontinuously helical). The NPA 1 signature appears at 97–99 (NPA). The Cytoplasmic segment spans residues 102 to 115 (VAMVCTRKISIAKS). At Ser-111 the chain carries Phosphoserine; by PKG. A helical transmembrane segment spans residues 116 to 136 (VFYIAAQCLGAIIGAGILYLV). Topologically, residues 137 to 155 (TPPSVVGGLGVTMVHGNLT) are extracellular. N-linked (GlcNAc...) asparagine glycosylation is present at Asn-153. A helical membrane pass occupies residues 156-176 (AGHGLLVELIITFQLVFTIFA). Topologically, residues 177 to 184 (SCDSKRTD) are cytoplasmic. Residue Ser-180 is modified to Phosphoserine; by PKC. Residues 185–205 (VTGSIALAIGFSVAIGHLFAI) form a helical membrane-spanning segment. Asn-206 carries N-linked (GlcNAc...) asparagine glycosylation. Over 206–208 (NYT) the chain is Extracellular. The segment at residues 209-222 (GASMNPARSFGPAV) is an intramembrane region (discontinuously helical). Residues 213–215 (NPA) carry the NPA 2 motif. Topologically, residues 223–231 (IMGNWENHW) are extracellular. The chain crosses the membrane as a helical span at residues 232–252 (IYWVGPIIGAVLAGGLYEYVF). Residues 253–323 (CPDVEFKRRF…DQSGEVLSSV (71 aa)) lie on the Cytoplasmic side of the membrane. Ser-276 and Ser-285 each carry phosphoserine. Residue Thr-289 is modified to Phosphothreonine. Ser-321 is modified (phosphoserine).

The protein belongs to the MIP/aquaporin (TC 1.A.8) family. In terms of assembly, homotetramer. The tetramers can form oligomeric arrays in membranes. The size of the oligomers differs between tissues and is smaller in skeletal muscle than in brain. Interaction between AQP4 oligomeric arrays in close-by cells can contribute to cell-cell adhesion. Part of a complex containing MLC1, TRPV4, HEPACAM and ATP1B1. In terms of processing, phosphorylation by PKC at Ser-180 reduces conductance by 50%. Phosphorylation by PKG at Ser-111 in response to glutamate increases conductance by 40%. Post-translationally, isoform 2: Palmitoylated on its N-terminal region. Isoform 1: Not palmitoylated. Detected in skeletal muscle. Detected in stomach, along the glandular base region of the fundic gland (at protein level). Detected in brain, lung and skeletal muscle, and at much lower levels in heart and ovary.

It localises to the cell membrane. Its subcellular location is the basolateral cell membrane. The protein resides in the endosome membrane. The protein localises to the sarcolemma. It is found in the cell projection. It catalyses the reaction H2O(in) = H2O(out). In terms of biological role, forms a water-specific channel. Plays an important role in brain water homeostasis. It is involved in glymphatic solute transport and is required for a normal rate of water exchange across the blood brain interface. Required for normal levels of cerebrospinal fluid influx into the brain cortex and parenchyma along paravascular spaces that surround penetrating arteries, and for normal drainage of interstitial fluid along paravenous drainage pathways. Thereby, it is required for normal clearance of solutes from the brain interstitial fluid, including soluble beta-amyloid peptides derived from APP. Plays a redundant role in urinary water homeostasis and urinary concentrating ability. This Homo sapiens (Human) protein is Aquaporin-4 (AQP4).